The sequence spans 541 residues: Methyl-accepting chemotaxis protein PcaY (541 aa).

Residues 1 to 10 (MLANLKIRTG) are Cytoplasmic-facing. Residues 11-31 (MFWVLSLFSLTLLFSTASAWW) traverse the membrane as a helical segment. Residues 32–189 (AAVGSDQQIT…ESDRRLARAQ (158 aa)) lie on the Periplasmic side of the membrane. The ligand-binding domain stretch occupies residues 35-187 (GSDQQITELD…MLESDRRLAR (153 aa)). A helical transmembrane segment spans residues 190–210 (LLSLCLLGMTVVLAVLCWAFI). Topologically, residues 211–541 (AQRVLHPLRE…MTALVGRFKV (331 aa)) are cytoplasmic. The HAMP domain occupies 212 to 264 (QRVLHPLREAGGHFRRIASGDLSVPVQGQGNNEIGQLFHELQRMQQSQRDTLG). Residues 269 to 505 (CARQLDAAAS…EVDRNLLNIR (237 aa)) enclose the Methyl-accepting transducer domain. The disordered stretch occupies residues 322–341 (TSQTTSESNQLAAQSRRQVS).

Belongs to the methyl-accepting chemotaxis (MCP) protein family.

The protein resides in the cell inner membrane. In terms of biological role, chemotactic-signal transducers respond to changes in the concentration of attractants and repellents in the environment, transduce a signal from the outside to the inside of the cell, and facilitate sensory adaptation through the variation of the level of methylation. PcaY is responsible for the detection of multiple aromatic and hydroaromatic compounds that are metabolized through the beta-ketoadipate catabolic pathway, including vanillin, vanillate, 4-hydroxybenzoate (4-HBA), benzoate and protocatechuate. It also senses several nonmetabolizable aromatic compounds. This chain is Methyl-accepting chemotaxis protein PcaY, found in Pseudomonas putida (strain ATCC 700007 / DSM 6899 / JCM 31910 / BCRC 17059 / LMG 24140 / F1).